We begin with the raw amino-acid sequence, 279 residues long: ANKRPAWIMGHMVNAIYQIDEFVNLGANSIETDVSFDKDANPEYTYHGVPCDCGRSCLKWEYFSDFLKGLRKATTPGDSKYHAKLVLVVFDLKTGSLYDNQAYDAGKKLAKNLLKHYWNNGNNGGRAYIVLSIPDLNHYKLITGFKETLKSEGHPELMDKVGHDFSGNDAIGDVGNAYKKAGVTGHVWQSDGITNCLLRGLSRVKDAVKNRDSSNGFINKVYYWTVDKRATTREALDAGVDGVMTNYPDVITDVLNESAYKAKFRIATYDDNPWETFKN.

Residue H11 is part of the active site. 2 residues coordinate Mg(2+): E31 and D33. H47 (nucleophile) is an active-site residue. 2 cysteine pairs are disulfide-bonded: C51–C57 and C53–C196. Mg(2+) is bound at residue D91. Residue N256 is glycosylated (N-linked (GlcNAc...) asparagine).

This sequence belongs to the arthropod phospholipase D family. Class II subfamily. Requires Mg(2+) as cofactor. Expressed by the venom gland.

The protein localises to the secreted. The enzyme catalyses an N-(acyl)-sphingosylphosphocholine = an N-(acyl)-sphingosyl-1,3-cyclic phosphate + choline. It carries out the reaction an N-(acyl)-sphingosylphosphoethanolamine = an N-(acyl)-sphingosyl-1,3-cyclic phosphate + ethanolamine. The catalysed reaction is a 1-acyl-sn-glycero-3-phosphocholine = a 1-acyl-sn-glycero-2,3-cyclic phosphate + choline. It catalyses the reaction a 1-acyl-sn-glycero-3-phosphoethanolamine = a 1-acyl-sn-glycero-2,3-cyclic phosphate + ethanolamine. Inhibited with low affinity by edelfosine. Its function is as follows. Dermonecrotic toxins cleave the phosphodiester linkage between the phosphate and headgroup of certain phospholipids (sphingolipid and lysolipid substrates), forming an alcohol (often choline) and a cyclic phosphate. This toxin acts on sphingomyelin (SM). It also acts on a broad range of lysophospholipids, like lysophosphatidylinositol (LPI), lysophosphatidylglycerol (LPG), lysophosphatidylethanolamine (LPE), lysobisphosphatidic acid (LBPA), lysophosphatidylserine (LPS) and lysophosphatidylcholines (LPC) of varying chain lengths. The substrate preference is LPI &gt; LPG &gt; LPS &gt; LPC &gt;&gt; LPE, LBPA. Furthermore, the enzyme also act on cyclic phosphatidic acid and lyso-platelet activating factor (LPAF, an alkyl-LPC). The enzyme does not act on sphingosylphosphorylcholine (SPC, also known as lyso-sphingomyelin) and PAF. The toxin may also act on ceramide phosphoethanolamine (CPE). It acts by transphosphatidylation, releasing exclusively cyclic phosphate products as second products. It does not exhibit detectable PLA1/2 activity. It induces dose-dependent hemolysis and dermonecrosis. Also induces increased vascular permeability, edema, inflammatory response, and platelet aggregation. The protein is Dermonecrotic toxin LrSicTox-alphaIA1i of Loxosceles reclusa (Brown recluse spider).